A 158-amino-acid polypeptide reads, in one-letter code: MSDLTHLDETGKARMVDVGAKDETLREAVVRGEVHMRPETLQRLAAGDMPKGDALATARIAGIMAAKRAPDLIPLCHPLLLTHVAVDVRLDAATSTVQIEATVRTVGKTGVEMEALTAVSVAALTVYDMCKAIDRTMQIGAIRLVRKSGGRSGEIVCE.

Residues 75 to 77 (LCH) and 113 to 114 (ME) contribute to the substrate site. D128 is a catalytic residue.

It belongs to the MoaC family. In terms of assembly, homohexamer; trimer of dimers.

It catalyses the reaction (8S)-3',8-cyclo-7,8-dihydroguanosine 5'-triphosphate = cyclic pyranopterin phosphate + diphosphate. It participates in cofactor biosynthesis; molybdopterin biosynthesis. Its function is as follows. Catalyzes the conversion of (8S)-3',8-cyclo-7,8-dihydroguanosine 5'-triphosphate to cyclic pyranopterin monophosphate (cPMP). In Roseiflexus castenholzii (strain DSM 13941 / HLO8), this protein is Cyclic pyranopterin monophosphate synthase.